A 630-amino-acid chain; its full sequence is 1-deoxy-D-xylulose-5-phosphate synthase (630 aa).

Residues His-72 and 113–115 (GHS) each bind thiamine diphosphate. Asp-144 is a Mg(2+) binding site. Residues 145–146 (GA), Asn-173, Tyr-284, and Glu-367 contribute to the thiamine diphosphate site. Residue Asn-173 coordinates Mg(2+).

This sequence belongs to the transketolase family. DXPS subfamily. Homodimer. Mg(2+) is required as a cofactor. The cofactor is thiamine diphosphate.

The catalysed reaction is D-glyceraldehyde 3-phosphate + pyruvate + H(+) = 1-deoxy-D-xylulose 5-phosphate + CO2. It participates in metabolic intermediate biosynthesis; 1-deoxy-D-xylulose 5-phosphate biosynthesis; 1-deoxy-D-xylulose 5-phosphate from D-glyceraldehyde 3-phosphate and pyruvate: step 1/1. In terms of biological role, catalyzes the acyloin condensation reaction between C atoms 2 and 3 of pyruvate and glyceraldehyde 3-phosphate to yield 1-deoxy-D-xylulose-5-phosphate (DXP). The chain is 1-deoxy-D-xylulose-5-phosphate synthase from Geobacillus sp. (strain WCH70).